The primary structure comprises 248 residues: NADP-dependent 3-hydroxy acid dehydrogenase YdfG (248 aa).

NADP(+) is bound by residues 7-12 (GATAGF), 32-33 (RR), 54-55 (DV), and N81. S134 serves as a coordination point for substrate. NADP(+) is bound by residues Y147, K151, and 177-185 (PGLVGGTEF). The Proton acceptor role is filled by Y147.

The protein belongs to the short-chain dehydrogenases/reductases (SDR) family. In terms of assembly, homotetramer.

It catalyses the reaction 3-hydroxypropanoate + NADP(+) = 3-oxopropanoate + NADPH + H(+). It carries out the reaction L-allo-threonine + NADP(+) = aminoacetone + CO2 + NADPH. Functionally, NADP-dependent dehydrogenase with broad substrate specificity acting on 3-hydroxy acids. Catalyzes the NADP-dependent oxidation of L-allo-threonine to L-2-amino-3-keto-butyrate, which is spontaneously decarboxylated into aminoacetone. Also acts on D-threonine, L-serine, D-serine, D-3-hydroxyisobutyrate, L-3-hydroxyisobutyrate, D-glycerate and L-glycerate. Able to catalyze the reduction of the malonic semialdehyde to 3-hydroxypropionic acid. YdfG is apparently supplementing RutE, the presumed malonic semialdehyde reductase involved in pyrimidine degradation since both are able to detoxify malonic semialdehyde. This chain is NADP-dependent 3-hydroxy acid dehydrogenase YdfG, found in Escherichia coli O6:H1 (strain CFT073 / ATCC 700928 / UPEC).